The following is a 1041-amino-acid chain: MNKLLLHLVRVISILGLANALTQTQPILKDIQITDSYTKTKECTDPDHWFIIEGQLSIPKGSQQNITFQVPDAFSSFPQEPFSIKHNSNSVATISRPDKSTNNFTISIPEKSSEDITTTFNFLAQLTSDAKSKVTEPKSIVYSFYSENTMFNDVIDYVAKNTSAITTDGGIYKTNNTAWFTVDLPMRTFRNPVYLTSQTSSSSDYVFDTSLTKFEVVTAVDSFNEPINAIPYTTVHDYSTEDEIRCLFNSTISGGLYFRVTYFTKKLSTSSISNTVELTYPDEGTSVRLLGKRDTSTTLASELYSESAANIDSTTSDDTTSSDAAITPTYSNSTLSSYTSQSSAIPEVAVTASLSSGILSSTVDGASTSADASMSAVSTVSSSSEQASSSSISLSAPSSSNSTFTTPSSSLSATETYSIISSASISVTQASYIDNSTTTAVTQSTSTIAVSSAEKLSSTLSYTSNVTISVSSATQHTTTPSYVSNSTTLSSSSVLESVISSPYLANTTVSGASSASQSTNPPYVSNSTTSSATQLATIAPFAINITGTSISSSITNTSSVSSTTSSLSSGPFVSNTTVASGSYILTTTTESAQLTEIGSLIPISTITTSTTTSGTDKTGSNKVASSTEIAQSIVNNSSLSVSTINTNAATAAANARNATFTHATHSGSLQPSYHSSSLLSSTIDTKVTTATTSTSRDGSSSLAFTTGLNQSVVTGTDKSDTYSVISSTESAQVTEYDSLLPISTLKPTVVTGTSRNSTFSMVSSTKLTEATATDKGDAYSVISSTQSAQVTEYGSMLPISTLETPTVIMSTDESGYFTLTTCTESGQATEYGSLIPISTLDGSVIYTFTGESVVVGYSTTVGAAQYAQHTSLVPVSTIKGSKTSLSTEESVVAGYSTTVGAAQYAQHTSLVPVSTIKGSKTSLSTEESVVAGYSTTVDSAQYAEHTNLVAIDTLKTSTFQKATATEVCVTCTALSSPHSATLDAGTTISLPTSSSTSLSTIITWYSSSTIKPPSISTYSGAAGQLTIRIGSLLLGLISFLL.

The first 20 residues, 1–20 (MNKLLLHLVRVISILGLANA), serve as a signal peptide directing secretion. 14 N-linked (GlcNAc...) asparagine glycosylation sites follow: Asn65, Asn103, Asn161, Asn175, Asn249, Asn332, Asn401, Asn435, Asn465, Asn485, Asn506, Asn526, Asn544, and Asn556. The tract at residues 388–410 (SSSSISLSAPSSSNSTFTTPSSS) is disordered. Repeat 1 spans residues 457-492 (SSTLSYTSNVTISVSSATQHTTTPSYVSNSTTLSSS). The tract at residues 457–962 (SSTLSYTSNV…TLKTSTFQKA (506 aa)) is 9 X approximate repeats. 2 consecutive repeat copies span residues 577 to 606 (TVASGSYILTTTTESAQLTEIGSLIPISTI) and 613 to 647 (SGTDKTGSNKVASSTEIAQSIVNNSSLSVSTINTN). N-linked (GlcNAc...) asparagine glycosylation is found at Asn635, Asn636, Asn657, and Asn709. The stretch at 716 to 745 (TDKSDTYSVISSTESAQVTEYDSLLPISTL) is repeat 4. Asn756 is a glycosylation site (N-linked (GlcNAc...) asparagine). A run of 5 repeats spans residues 773–802 (TDKGDAYSVISSTQSAQVTEYGSMLPISTL), 811–840 (TDESGYFTLTTCTESGQATEYGSLIPISTL), 849–886 (TGESVVVGYSTTVGAAQYAQHTSLVPVSTIKGSKTSLS), 887–924 (TEESVVAGYSTTVGAAQYAQHTSLVPVSTIKGSKTSLS), and 925–962 (TEESVVAGYSTTVDSAQYAEHTNLVAIDTLKTSTFQKA). The GPI-anchor amidated glycine moiety is linked to residue Gly1020. A propeptide spans 1021–1041 (AAGQLTIRIGSLLLGLISFLL) (removed in mature form).

In terms of processing, the GPI-anchor is attached to the protein in the endoplasmic reticulum and serves to target the protein to the cell surface. There, the glucosamine-inositol phospholipid moiety is cleaved off and the GPI-modified mannoprotein is covalently attached via its lipidless GPI glycan remnant to the 1,6-beta-glucan of the outer cell wall layer.

It is found in the secreted. It localises to the cell wall. Its subcellular location is the membrane. Seems to be involved in the correct timing of cell separation after cytokinesis, as separation of mutant daughter cells is delayed. Could either be an enzyme necessary for glucans-degradation of the cell wall at the neck region between mother and daughter cells or a regulatory protein controlling this metabolic step. This is Protein EGT2 (EGT2) from Saccharomyces cerevisiae (strain ATCC 204508 / S288c) (Baker's yeast).